Reading from the N-terminus, the 551-residue chain is GMP synthase [glutamine-hydrolyzing] (551 aa).

The tract at residues 1–28 (MTSSPTAAARTEGEAAPTVPTQVESGTA) is disordered. Positions 19 to 28 (VPTQVESGTA) are enriched in polar residues. The 191-residue stretch at 37–227 (MVAILDFGSQ…VYHICGCEPE (191 aa)) folds into the Glutamine amidotransferase type-1 domain. C114 (nucleophile) is an active-site residue. Active-site residues include H201 and E203. The GMPS ATP-PPase domain maps to 228–426 (WTTAAFIEEA…LGLPEEIVQR (199 aa)). 255–261 (SGGVDSS) is an ATP binding site.

Homodimer.

The enzyme catalyses XMP + L-glutamine + ATP + H2O = GMP + L-glutamate + AMP + diphosphate + 2 H(+). Its pathway is purine metabolism; GMP biosynthesis; GMP from XMP (L-Gln route): step 1/1. Catalyzes the synthesis of GMP from XMP. This Gloeobacter violaceus (strain ATCC 29082 / PCC 7421) protein is GMP synthase [glutamine-hydrolyzing].